The primary structure comprises 416 residues: 5-hydroxytryptamine receptor 1A-beta (416 aa).

Over 1-35 (MEGTNNTTGWTHFDSTSNRTSKSFDEEVKLSYQVV) the chain is Extracellular. 3 N-linked (GlcNAc...) asparagine glycosylation sites follow: asparagine 5, asparagine 6, and asparagine 18. The helical transmembrane segment at 36 to 56 (TSFLLGALILCSIFGNACVVA) threads the bilayer. Residues 57 to 70 (AIALERSLQNVANY) lie on the Cytoplasmic side of the membrane. Residues 71 to 95 (LIGSLAVTDLMVSVLVLPMAALYQV) form a helical membrane-spanning segment. Topologically, residues 96-104 (LNRWTLGQI) are extracellular. The chain crosses the membrane as a helical span at residues 105-129 (PCDIFISLDMLCCTSSILHLCVIAL). Cysteine 106 and cysteine 189 form a disulfide bridge. Serotonin contacts are provided by aspartate 113 and cysteine 117. The DRY motif; important for ligand-induced conformation changes signature appears at 130-132 (DRY). At 130-149 (DRYWAITEPIDYMKKRTPRR) the chain is on the cytoplasmic side. Residues 150-171 (AAVLISVTWLVGFSISIPPMLI) form a helical membrane-spanning segment. Residues 172 to 195 (MRSQPSSMAEDRANSKQCKITQDP) are Extracellular-facing. The helical transmembrane segment at 196-218 (WYTIYSTFGAFYIPLTLMLVLYG) threads the bilayer. The Cytoplasmic portion of the chain corresponds to 219-340 (RIFKAARFRI…LARERKTVKT (122 aa)). 3 residues coordinate 1D-myo-inositol 4-phosphate: lysine 339, threonine 340, and glycine 346. A helical transmembrane segment spans residues 341-364 (LGIIMGTFILCWLPFFIVALVMPF). Residues 365-372 (CQESCFMP) are Extracellular-facing. A helical membrane pass occupies residues 373 to 397 (HWLKDVINWLGYSNSLLNPIIYAYF). The NPxxY motif; important for ligand-induced conformation changes and signaling motif lies at 390 to 394 (NPIIY). Positions 397, 398, and 399 each coordinate 1D-myo-inositol 4-phosphate. The Cytoplasmic portion of the chain corresponds to 398 to 416 (NKDFQSAFKKIIKCHFCRA).

It belongs to the G-protein coupled receptor 1 family. 5-hydroxytryptamine receptor subfamily.

The protein resides in the cell membrane. G-protein coupled receptor activity is regulated by lipids: phosphatidylinositol 4-phosphate increases HTR1A-mediated activity. In terms of biological role, G-protein coupled receptor for 5-hydroxytryptamine (serotonin). Also functions as a receptor for various drugs and psychoactive substances. Ligand binding causes a conformation change that triggers signaling via guanine nucleotide-binding proteins (G proteins) and modulates the activity of downstream effectors, such as adenylate cyclase. HTR1A is coupled to G(i)/G(o) G alpha proteins and mediates inhibitory neurotransmission: signaling inhibits adenylate cyclase activity and activates a phosphatidylinositol-calcium second messenger system that regulates the release of Ca(2+) ions from intracellular stores. Beta-arrestin family members regulate signaling by mediating both receptor desensitization and resensitization processes. This chain is 5-hydroxytryptamine receptor 1A-beta (htr1a-B), found in Takifugu rubripes (Japanese pufferfish).